We begin with the raw amino-acid sequence, 115 residues long: Protein TrbA (115 aa).

4 helical membrane-spanning segments follow: residues 5-25 (YLKMFTGVVLLIFVIIAGYFF), 39-59 (LVFLVVNIACLYVLTASLWFL), 60-80 (CGAIMSQGAALVVSIVAAALP), and 91-111 (IFICIMLSSVWSGVMWFFIRG).

The protein resides in the cell membrane. The sequence is that of Protein TrbA (trbA) from Escherichia coli (strain K12).